A 489-amino-acid chain; its full sequence is Blue-light-activated histidine kinase (489 aa).

One can recognise a PAS domain in the interval 19–93 (ATDPFRAAVE…AIKSAIAAEK (75 aa)). An S-4a-FMN cysteine modification is found at cysteine 69. 2 PAC domains span residues 93 to 147 (KPID…ELEK) and 232 to 281 (YSIE…NKAL). An HWE histidine kinase domain region spans residues 259-341 (NPLVLGIVQD…LLKENWAGAT (83 aa)). A Phosphohistidine; by autocatalysis modification is found at histidine 288.

In terms of processing, FMN binds covalently to cysteine after exposure to blue light and this bond is spontaneously broken in the dark.

The catalysed reaction is ATP + protein L-histidine = ADP + protein N-phospho-L-histidine.. In terms of biological role, photosensitive kinase that is involved in increased bacterial virulence upon exposure to light. Once ejected from an infected animal host, sunlight acts as an environmental signal that increases the virulence of the bacterium, preparing it for infection of the next host. This photoreceptor protein is directly related to the bacterium's survival and replication within host macrophages, as it is required for optimal replication of bacteria inside macrophages. In Brucella abortus (strain 2308), this protein is Blue-light-activated histidine kinase.